A 206-amino-acid chain; its full sequence is Probable thymidylate kinase (206 aa).

Residue 7–14 (GIDGSGKS) coordinates ATP.

Belongs to the thymidylate kinase family.

The catalysed reaction is dTMP + ATP = dTDP + ADP. In Methanospirillum hungatei JF-1 (strain ATCC 27890 / DSM 864 / NBRC 100397 / JF-1), this protein is Probable thymidylate kinase.